Reading from the N-terminus, the 580-residue chain is Probable alpha-1,3-mannosyltransferase MNT4 (580 aa).

Residues 1 to 10 (MVLRIRRIKK) lie on the Cytoplasmic side of the membrane. A helical; Signal-anchor for type II membrane protein membrane pass occupies residues 11 to 29 (LAPLIFTSLLSLIVLFRVY). Residues 30 to 580 (RQYPFSDHFE…KVVELWNKVV (551 aa)) lie on the Lumenal side of the membrane. N-linked (GlcNAc...) asparagine glycans are attached at residues Asn-132, Asn-167, Asn-223, and Asn-349.

It belongs to the MNN1/MNT family.

It localises to the membrane. The protein is Probable alpha-1,3-mannosyltransferase MNT4 (MNT4) of Saccharomyces cerevisiae (strain ATCC 204508 / S288c) (Baker's yeast).